Here is a 910-residue protein sequence, read N- to C-terminus: Staphylococcal nuclease domain-containing protein 1 (910 aa).

A2 is subject to N-acetylalanine. TNase-like domains are found at residues 18 to 166 (TVQR…MWSE), 193 to 328 (KPVN…IWRD), and 341 to 496 (KQFV…LHSK). The residue at position 103 (T103) is a Phosphothreonine. K193 is subject to N6-acetyllysine. The residue at position 240 (T240) is a Phosphothreonine. 2 consecutive short sequence motifs (nuclear localization signal) follow at residues 321–325 (RRLRI) and 388–392 (KKLRP). A Phosphoserine modification is found at S426. K513 participates in a covalent cross-link: Glycyl lysine isopeptide (Lys-Gly) (interchain with G-Cter in SUMO2). Residues 525 to 660 (GRSEAVVEYV…KQKKEKVWAH (136 aa)) form the TNase-like 4 domain. K641 carries the N6-acetyllysine modification. At S645 the chain carries Phosphoserine. The region spanning 729-787 (APRRGEFCIAKFVDGEWYRARVEKVESPAKVHVFYIDYGNREILPSTRLGTLPPAFSTR) is the Tudor domain. At T779 the chain carries Phosphothreonine. Phosphoserine occurs at positions 785 and 909.

Forms a ternary complex with STAT6 and POLR2A. Associates with the RNA-induced silencing complex (RISC). Interacts with the RISC components AGO2, FMR1 and TNRC6A. Interacts with GTF2E1 and GTF2E2. Interacts with PIM1. Interacts with STAT5. Interacts with SYT11 (via C2 2 domain); the interaction with SYT11 is direct. Post-translationally, phosphorylated by PIM1 in vitro. In lactating cows highly expressed in mammary epithelial cells.

The protein localises to the cytoplasm. Its subcellular location is the nucleus. It is found in the melanosome. It carries out the reaction Endonucleolytic cleavage to nucleoside 3'-phosphates and 3'-phosphooligonucleotide end-products.. In terms of biological role, endonuclease that mediates miRNA decay of both protein-free and AGO2-loaded miRNAs. As part of its function in miRNA decay, regulates mRNAs involved in G1-to-S phase transition. Functions as a bridging factor between STAT6 and the basal transcription factor. Plays a role in PIM1 regulation of MYB activity. Functions as a transcriptional coactivator for STAT5. The chain is Staphylococcal nuclease domain-containing protein 1 (SND1) from Bos taurus (Bovine).